The chain runs to 619 residues: UvrABC system protein C (619 aa).

Residues 20–98 (TAPGVYRMYA…IKSLSPRYNV (79 aa)) form the GIY-YIG domain. Residues 207-242 (DQLGEEIMHSMQQASEALEFERAARLRDLLSSLRSM) form the UVR domain.

This sequence belongs to the UvrC family. As to quaternary structure, interacts with UvrB in an incision complex.

It localises to the cytoplasm. The UvrABC repair system catalyzes the recognition and processing of DNA lesions. UvrC both incises the 5' and 3' sides of the lesion. The N-terminal half is responsible for the 3' incision and the C-terminal half is responsible for the 5' incision. This Xanthomonas euvesicatoria pv. vesicatoria (strain 85-10) (Xanthomonas campestris pv. vesicatoria) protein is UvrABC system protein C.